A 156-amino-acid chain; its full sequence is ATP synthase subunit b (156 aa).

Residues 5–25 traverse the membrane as a helical segment; that stretch reads LTLIGQAIAFAFFVAFCMKFV.

This sequence belongs to the ATPase B chain family. In terms of assembly, F-type ATPases have 2 components, F(1) - the catalytic core - and F(0) - the membrane proton channel. F(1) has five subunits: alpha(3), beta(3), gamma(1), delta(1), epsilon(1). F(0) has three main subunits: a(1), b(2) and c(10-14). The alpha and beta chains form an alternating ring which encloses part of the gamma chain. F(1) is attached to F(0) by a central stalk formed by the gamma and epsilon chains, while a peripheral stalk is formed by the delta and b chains.

It localises to the cell inner membrane. Functionally, f(1)F(0) ATP synthase produces ATP from ADP in the presence of a proton or sodium gradient. F-type ATPases consist of two structural domains, F(1) containing the extramembraneous catalytic core and F(0) containing the membrane proton channel, linked together by a central stalk and a peripheral stalk. During catalysis, ATP synthesis in the catalytic domain of F(1) is coupled via a rotary mechanism of the central stalk subunits to proton translocation. Its function is as follows. Component of the F(0) channel, it forms part of the peripheral stalk, linking F(1) to F(0). This is ATP synthase subunit b from Acinetobacter baumannii (strain SDF).